Here is a 276-residue protein sequence, read N- to C-terminus: Apulose-4-phosphate transketolase subunit A (276 aa).

The protein belongs to the transketolase family. As to quaternary structure, probable heterodimer composed of AptA and AptB. It depends on thiamine diphosphate as a cofactor.

The enzyme catalyses apulose 4-phosphate + D-glyceraldehyde 3-phosphate = D-xylulose 5-phosphate + dihydroxyacetone phosphate. Its pathway is carbohydrate metabolism. Its function is as follows. Involved in catabolism of D-apiose. Catalyzes the transfer of the glycolaldehyde group from apulose-4-phosphate to D-glyceraldehyde 3-phosphate, generating dihydroxyacetone phosphate and D-xylulose-5-phosphate. This chain is Apulose-4-phosphate transketolase subunit A, found in Actinobacillus succinogenes (strain ATCC 55618 / DSM 22257 / CCUG 43843 / 130Z).